A 160-amino-acid chain; its full sequence is RNA-binding protein 3 (160 aa).

Residues 6–84 (GKLFVGGLNF…RQIRVDHAGK (79 aa)) form the RRM domain. Omega-N-methylarginine is present on R47. A disordered region spans residues 81–116 (HAGKSARGSRGGAFGSYERGRGYPRGGGDQGYGSGR). A compositionally biased stretch (gly residues) spans 103–114 (YPRGGGDQGYGS). The residue at position 105 (R105) is an Asymmetric dimethylarginine; alternate. R105 carries the dimethylated arginine; alternate modification. R105 is modified (omega-N-methylarginine; alternate). 2 positions are modified to omega-N-methylarginine: R120 and R134. The segment at 135–160 (SRDYGGRSQGGYDRYSGGNYRDNYDN) is disordered. S150 carries the post-translational modification Phosphoserine. At Y158 the chain carries Phosphotyrosine.

In terms of assembly, interacts with RPL4. Associates with the 60S ribosomal subunits.

It localises to the nucleus. Its subcellular location is the cytoplasm. The protein resides in the cell projection. It is found in the dendrite. Its function is as follows. Cold-inducible mRNA binding protein that enhances global protein synthesis at both physiological and mild hypothermic temperatures. Reduces the relative abundance of microRNAs, when overexpressed. Enhances phosphorylation of translation initiation factors and active polysome formation. The chain is RNA-binding protein 3 from Capra hircus (Goat).